We begin with the raw amino-acid sequence, 328 residues long: Phospholipid scramblase 1 (328 aa).

Residues 1-93 (MENHSKQTEA…NHPGGPGGTP (93 aa)) form a proline-rich domain (PRD) region. A disordered region spans residues 1 to 96 (MENHSKQTEA…GGPGGTPWMP (96 aa)). The Cytoplasmic portion of the chain corresponds to 1–297 (MENHSKQTEA…IQFPLDLDVK (297 aa)). Positions 18-26 (PAGYPPPYP) match the SH3-binding 1 motif. A PPxY motif motif is present at residues 22–25 (PPPY). A compositionally biased stretch (low complexity) spans 28–47 (AAFQGPSDHAAYPIPQAGYQ). The segment covering 49 to 64 (PPGPYPGPQPGYPVPP) has biased composition (pro residues). The short motif at 56 to 64 (PQPGYPVPP) is the SH3-binding 2 element. Tyr-83 is subject to Phosphotyrosine; by ABL. The SH3-binding 3 signature appears at 93 to 101 (PWMPAPPPP). Thr-170 is subject to Phosphothreonine; by PKC/PRKCD. Residues Cys-193, Cys-194, Cys-197, and Cys-198 are each lipidated (S-palmitoyl cysteine). The short motif at 269 to 275 (SKQWSGF) is the Nuclear localization signal element. The chain crosses the membrane as a helical span at residues 298 to 314 (MKAVMLGACFLIDFMFF). Residues 315-328 (ERTGNEEQRSGAWQ) are Extracellular-facing.

This sequence belongs to the phospholipid scramblase family. As to quaternary structure, forms homooligomers in the presence of calcium. Interacts with ABL. Interacts with RELT, RELL1 and RELL2. Interacts with OXSR1 in the presence of RELT. Interacts with OCLN, TOP2A and TOP2B. Interacts with TRPC1, TRPC4 and TRPC5. Interacts with ILDR1. Requires Ca(2+) as cofactor. Mg(2+) is required as a cofactor. The cofactor is Zn(2+). Phosphorylation at Thr-170 by PKC/PKCD increases its phospholipid scramblase activity during both cell stimulation and apoptosis. Phosphorylated by OXSR1 in the presence of RELT. Post-translationally, palmitoylation is required for its phospholipid scramblase activity. Palmitoylation regulates its localization to the cell membrane or the nucleus; trafficking to the cell membrane is dependent upon palmitoylation whereas in the absence of palmitoylation, localizes to the nucleus. Highly expressed in kidney, lung, liver and bone marrow, slightly in spleen, heart and macrophage.

It is found in the cell membrane. The protein resides in the nucleus. The protein localises to the cytoplasm. It localises to the perinuclear region. The catalysed reaction is a 1,2-diacyl-sn-glycero-3-phosphocholine(in) = a 1,2-diacyl-sn-glycero-3-phosphocholine(out). The enzyme catalyses a 1,2-diacyl-sn-glycero-3-phosphoethanolamine(in) = a 1,2-diacyl-sn-glycero-3-phosphoethanolamine(out). It carries out the reaction a 1,2-diacyl-sn-glycero-3-phospho-L-serine(in) = a 1,2-diacyl-sn-glycero-3-phospho-L-serine(out). Catalyzes calcium-induced ATP-independent rapid bidirectional and non-specific distribution of phospholipids (lipid scrambling or lipid flip-flop) between the inner and outer leaflet of the plasma membrane resulting in collapse of the phospholipid asymmetry which leads to phosphatidylserine externalization on the cell surface. Mediates calcium-dependent phosphatidylserine externalization and apoptosis in neurons via its association with TRPC5. Also exhibits magnesium-dependent nuclease activity against double-stranded DNA and RNA but not single-stranded DNA and can enhance DNA decatenation mediated by TOP2A. Negatively regulates FcR-mediated phagocytosis in differentiated macrophages. May contribute to cytokine-regulated cell proliferation and differentiation. The protein is Phospholipid scramblase 1 (Plscr1) of Mus musculus (Mouse).